We begin with the raw amino-acid sequence, 286 residues long: Phospholipase A1 (286 aa).

The N-terminal stretch at M1 to A20 is a signal peptide. The Periplasmic portion of the chain corresponds to Q21–L49. Residues Y50–T62 traverse the membrane as a beta stranded segment. Residues S63–K81 are Extracellular-facing. Residues D82–R96 form a beta stranded membrane-spanning segment. Residues G97–N102 are Periplasmic-facing. Residues S103–W115 form a beta stranded membrane-spanning segment. Topologically, residues Q116–P125 are extracellular. A Ca(2+)-binding site is contributed by S123. The beta stranded transmembrane segment at F126–F145 threads the bilayer. The Periplasmic portion of the chain corresponds to A146–G147. The beta stranded transmembrane segment at W148–S161 threads the bilayer. H159 acts as the Proton acceptor in catalysis. Residue S161 is the Nucleophile of the active site. At N162–R170 the chain is on the extracellular side. 2 residues coordinate Ca(2+): R164 and S169. The chain crosses the membrane as a beta stranded span at residues S171 to N183. Topologically, residues G184–N185 are periplasmic. A beta stranded membrane pass occupies residues W186–V195. The Extracellular portion of the chain corresponds to V196–R213. Ca(2+) is bound at residue D201. A beta stranded transmembrane segment spans residues L214 to L220. The Periplasmic segment spans residues G221 to E222. Residues A223–Y231 traverse the membrane as a beta stranded segment. Over N232–G238 the chain is Extracellular. Residues G239–P247 form a beta stranded membrane-spanning segment. Topologically, residues I248–V252 are periplasmic. Residues R253–Y262 traverse the membrane as a beta stranded segment. Residues G263 to F271 are Extracellular-facing. Residues N272–N283 traverse the membrane as a beta stranded segment. Topologically, residues D284–F286 are periplasmic.

The protein belongs to the phospholipase A1 family. Homodimer; dimerization is reversible, and the dimeric form is the active one. The cofactor is Ca(2+).

It is found in the cell outer membrane. It carries out the reaction a 1,2-diacyl-sn-glycero-3-phosphocholine + H2O = a 2-acyl-sn-glycero-3-phosphocholine + a fatty acid + H(+). The enzyme catalyses a 1,2-diacyl-sn-glycero-3-phosphocholine + H2O = a 1-acyl-sn-glycero-3-phosphocholine + a fatty acid + H(+). Its function is as follows. Hydrolysis of phosphatidylcholine with phospholipase A2 (EC 3.1.1.4) and phospholipase A1 (EC 3.1.1.32) activities. This Klebsiella pneumoniae protein is Phospholipase A1 (pldA).